Consider the following 275-residue polypeptide: MENINKIPVVINGAGGKMGREVVKAVAGAADMEIIAAVDKNPALLGQDAGEIAGCGAVEVPIVNDLEASLVMATQSKIQGVMVDFTHPSGVYANTRAAIAYGVRPVVGTTGLSEEQINDLKEFAEKASTGALIIPNFSIGVVLLQQASLQAAKYFDHVEIIELHHNQKADAPSGTAIKTAQMLAELGKQFNPAEVEEKEEMPGAKGAVTEDNIRIHSVRLPGLIAHQEMIFGAPGQIYTLRHDTSDRSCYMPGVLLSIRKVTELNTLVYGLENIL.

Residues 13 to 18 (GAGGKM) and 108 to 110 (GTT) each bind NAD(+). The active-site Proton donor/acceptor is histidine 164. Residue histidine 165 coordinates (S)-2,3,4,5-tetrahydrodipicolinate. Lysine 168 acts as the Proton donor in catalysis. 174-175 (GT) provides a ligand contact to (S)-2,3,4,5-tetrahydrodipicolinate.

The protein belongs to the DapB family.

Its subcellular location is the cytoplasm. It catalyses the reaction (S)-2,3,4,5-tetrahydrodipicolinate + NAD(+) + H2O = (2S,4S)-4-hydroxy-2,3,4,5-tetrahydrodipicolinate + NADH + H(+). It carries out the reaction (S)-2,3,4,5-tetrahydrodipicolinate + NADP(+) + H2O = (2S,4S)-4-hydroxy-2,3,4,5-tetrahydrodipicolinate + NADPH + H(+). It participates in amino-acid biosynthesis; L-lysine biosynthesis via DAP pathway; (S)-tetrahydrodipicolinate from L-aspartate: step 4/4. In terms of biological role, catalyzes the conversion of 4-hydroxy-tetrahydrodipicolinate (HTPA) to tetrahydrodipicolinate. In Picosynechococcus sp. (strain ATCC 27264 / PCC 7002 / PR-6) (Agmenellum quadruplicatum), this protein is 4-hydroxy-tetrahydrodipicolinate reductase.